A 477-amino-acid polypeptide reads, in one-letter code: Ribulose bisphosphate carboxylase large chain (477 aa).

Residues 1–2 (MS) constitute a propeptide that is removed on maturation. Proline 3 is subject to N-acetylproline. Lysine 14 bears the N6,N6,N6-trimethyllysine mark. Asparagine 123 and threonine 173 together coordinate substrate. Residue lysine 175 is the Proton acceptor of the active site. Lysine 177 is a binding site for substrate. Mg(2+)-binding residues include lysine 201, aspartate 203, and glutamate 204. At lysine 201 the chain carries N6-carboxylysine. Histidine 294 functions as the Proton acceptor in the catalytic mechanism. Substrate contacts are provided by arginine 295, histidine 327, and serine 379.

This sequence belongs to the RuBisCO large chain family. Type I subfamily. In terms of assembly, heterohexadecamer of 8 large chains and 8 small chains; disulfide-linked. The disulfide link is formed within the large subunit homodimers. Mg(2+) serves as cofactor. In terms of processing, the disulfide bond which can form in the large chain dimeric partners within the hexadecamer appears to be associated with oxidative stress and protein turnover.

Its subcellular location is the plastid. The protein localises to the chloroplast. The enzyme catalyses 2 (2R)-3-phosphoglycerate + 2 H(+) = D-ribulose 1,5-bisphosphate + CO2 + H2O. The catalysed reaction is D-ribulose 1,5-bisphosphate + O2 = 2-phosphoglycolate + (2R)-3-phosphoglycerate + 2 H(+). In terms of biological role, ruBisCO catalyzes two reactions: the carboxylation of D-ribulose 1,5-bisphosphate, the primary event in carbon dioxide fixation, as well as the oxidative fragmentation of the pentose substrate in the photorespiration process. Both reactions occur simultaneously and in competition at the same active site. The chain is Ribulose bisphosphate carboxylase large chain from Nicotiana debneyi (Debney's tobacco).